Consider the following 200-residue polypeptide: Max dimerization protein 3 (200 aa).

Disordered regions lie at residues 26–56 and 134–164; these read EHGY…DNVR and LLPP…QEDL. The bHLH domain maps to 54 to 106; it reads NVRSVHNELEKHRRAQLRRCLEQLKQQVPLSMENSRHTTLSLLHRAKQHIKKL.

In terms of assembly, efficient DNA binding requires dimerization with another bHLH protein. Binds DNA as a heterodimer with MAX.

The protein resides in the nucleus. Transcriptional repressor. Binds with MAX to form a sequence-specific DNA-binding protein complex which recognizes the core sequence 5'-CAC[GA]TG-3'. The chain is Max dimerization protein 3 (mxd3) from Xenopus tropicalis (Western clawed frog).